A 273-amino-acid polypeptide reads, in one-letter code: Formamidopyrimidine-DNA glycosylase (273 aa).

The Schiff-base intermediate with DNA role is filled by P2. E3 serves as the catalytic Proton donor. K59 serves as the catalytic Proton donor; for beta-elimination activity. H92 and R111 together coordinate DNA. The segment at 239-273 adopts an FPG-type zinc-finger fold; the sequence is KVYGKTGEPCVICGTPIEKIKLNGRGTHFCPHCQK. The Proton donor; for delta-elimination activity role is filled by R263.

The protein belongs to the FPG family. In terms of assembly, monomer. The cofactor is Zn(2+).

The catalysed reaction is Hydrolysis of DNA containing ring-opened 7-methylguanine residues, releasing 2,6-diamino-4-hydroxy-5-(N-methyl)formamidopyrimidine.. The enzyme catalyses 2'-deoxyribonucleotide-(2'-deoxyribose 5'-phosphate)-2'-deoxyribonucleotide-DNA = a 3'-end 2'-deoxyribonucleotide-(2,3-dehydro-2,3-deoxyribose 5'-phosphate)-DNA + a 5'-end 5'-phospho-2'-deoxyribonucleoside-DNA + H(+). Involved in base excision repair of DNA damaged by oxidation or by mutagenic agents. Acts as a DNA glycosylase that recognizes and removes damaged bases. Has a preference for oxidized purines, such as 7,8-dihydro-8-oxoguanine (8-oxoG). Has AP (apurinic/apyrimidinic) lyase activity and introduces nicks in the DNA strand. Cleaves the DNA backbone by beta-delta elimination to generate a single-strand break at the site of the removed base with both 3'- and 5'-phosphates. This Listeria innocua serovar 6a (strain ATCC BAA-680 / CLIP 11262) protein is Formamidopyrimidine-DNA glycosylase.